A 90-amino-acid polypeptide reads, in one-letter code: Small ribosomal subunit protein bS20 (90 aa).

It belongs to the bacterial ribosomal protein bS20 family.

In terms of biological role, binds directly to 16S ribosomal RNA. This chain is Small ribosomal subunit protein bS20, found in Desulfitobacterium hafniense (strain DSM 10664 / DCB-2).